The following is an 838-amino-acid chain: Shutoff protein (838 aa).

The tract at residues 1–102 (MEDQHSAASE…EQEEDSPDRY (102 aa)) is disordered. Residues 18–35 (TLPPPPPPPPPPTSPPPS) are compositionally biased toward pro residues. The segment covering 52 to 65 (TCSSSSSSSASSEC) has biased composition (low complexity). The segment at 291–353 (LMQTLLVRRA…ACMVTVQLHC (63 aa)) is binding to host EIF4G. Positions 356 to 474 (TFLTSREMVR…SLWTGFDERT (119 aa)) constitute an RRM domain. A phosphotyrosine; by host mark is found at Y373 and Y690. A disordered region spans residues 693 to 838 (PHTGEELNTA…QELRRPQRGS (146 aa)). Residues 701-710 (TAAPSTAHHA) show a composition bias toward low complexity. Composition is skewed to basic and acidic residues over residues 737–746 (SYADRVRSEL) and 770–787 (HSRDAARRRGSQQRDQRQ). The segment covering 813-829 (QALLHQQQQQQEHQPAQ) has biased composition (low complexity).

It belongs to the adenoviridae shutoff protein family. Monomer. Interacts with hexon protein; this interaction allows chaperoning and trimerization of hexon proteins. Interacts (via N-terminus) with host initiation factor EIF4G (via C-terminus). Interacts (via RRM domain) with viral mRNAs that contain the tripartite leader; this interaction allows ribosome shunting and expression of viral late mRNAs. In terms of processing, might be cleaved by the viral protease. Post-translationally, phosphorylated. Tyrosine phosphorylation enhances preferential binding to tripartite leader mRNAs and allows ribosome shunting. Methylated. Asymmetric dimethylation by host PRMT1 of the Arg/Gly-rich region may regulate shutoff protein binding to hexon and promote the capsid assembly in the nucleus.

Its subcellular location is the host cytoplasm. Protein that inhibits host translation while promoting late viral translation by ribosome shunting. Blocks host cap-dependent translation by binding to eIF4G, displacing MKNK1 from cap initiation complexes and preventing EIF4E phosphorylation. Binds to the tripartite leader sequence of viral late mRNAs and recruits host eIF4G, PABPC1/poly-A binding protein and 40S ribosomes subunits on viral mRNAs, allowing ribosome shunting and efficient translation of late viral mRNAs even though conventional translation via ribosome scanning from the cap has been shut off in the host cell. During assembly, acts as a chaperone protein that helps hexon proteins assembly into trimers. In Porcine adenovirus A serotype 3 (PAdV-3), this protein is Shutoff protein.